A 198-amino-acid polypeptide reads, in one-letter code: Superoxide dismutase [Fe] (198 aa).

Residues His27, His74, Asp158, and His162 each contribute to the Fe cation site.

This sequence belongs to the iron/manganese superoxide dismutase family. Homodimer. Requires Fe cation as cofactor.

The protein resides in the cytoplasm. It carries out the reaction 2 superoxide + 2 H(+) = H2O2 + O2. Destroys superoxide anion radicals which are normally produced within the cells and which are toxic to biological systems. The chain is Superoxide dismutase [Fe] (SODB) from Plasmodium falciparum (isolate HB3).